The following is a 336-amino-acid chain: Ketol-acid reductoisomerase (NADP(+)) (336 aa).

Residues 3–183 (ATMYYDRDVS…GGTRAGVLET (181 aa)) form the KARI N-terminal Rossmann domain. NADP(+)-binding positions include 26–29 (YGSQ), R49, S52, S54, and 84–87 (DETQ). Residue H109 is part of the active site. G135 contacts NADP(+). In terms of domain architecture, KARI C-terminal knotted spans 184–329 (TFKEETETDL…RELRSKMPFI (146 aa)). Positions 192, 196, 228, and 232 each coordinate Mg(2+). Substrate is bound at residue S253.

It belongs to the ketol-acid reductoisomerase family. The cofactor is Mg(2+).

It catalyses the reaction (2R)-2,3-dihydroxy-3-methylbutanoate + NADP(+) = (2S)-2-acetolactate + NADPH + H(+). The enzyme catalyses (2R,3R)-2,3-dihydroxy-3-methylpentanoate + NADP(+) = (S)-2-ethyl-2-hydroxy-3-oxobutanoate + NADPH + H(+). The protein operates within amino-acid biosynthesis; L-isoleucine biosynthesis; L-isoleucine from 2-oxobutanoate: step 2/4. Its pathway is amino-acid biosynthesis; L-valine biosynthesis; L-valine from pyruvate: step 2/4. Involved in the biosynthesis of branched-chain amino acids (BCAA). Catalyzes an alkyl-migration followed by a ketol-acid reduction of (S)-2-acetolactate (S2AL) to yield (R)-2,3-dihydroxy-isovalerate. In the isomerase reaction, S2AL is rearranged via a Mg-dependent methyl migration to produce 3-hydroxy-3-methyl-2-ketobutyrate (HMKB). In the reductase reaction, this 2-ketoacid undergoes a metal-dependent reduction by NADPH to yield (R)-2,3-dihydroxy-isovalerate. The chain is Ketol-acid reductoisomerase (NADP(+)) from Deinococcus geothermalis (strain DSM 11300 / CIP 105573 / AG-3a).